Reading from the N-terminus, the 312-residue chain is Aspartate carbamoyltransferase catalytic subunit (312 aa).

Carbamoyl phosphate contacts are provided by Arg-58 and Thr-59. Lys-86 is a binding site for L-aspartate. Carbamoyl phosphate is bound by residues Arg-108, His-136, and Gln-139. L-aspartate-binding residues include Arg-169 and Arg-223. Residues Gly-264 and Pro-265 each coordinate carbamoyl phosphate.

It belongs to the aspartate/ornithine carbamoyltransferase superfamily. ATCase family. In terms of assembly, heterododecamer (2C3:3R2) of six catalytic PyrB chains organized as two trimers (C3), and six regulatory PyrI chains organized as three dimers (R2).

The enzyme catalyses carbamoyl phosphate + L-aspartate = N-carbamoyl-L-aspartate + phosphate + H(+). It participates in pyrimidine metabolism; UMP biosynthesis via de novo pathway; (S)-dihydroorotate from bicarbonate: step 2/3. Its function is as follows. Catalyzes the condensation of carbamoyl phosphate and aspartate to form carbamoyl aspartate and inorganic phosphate, the committed step in the de novo pyrimidine nucleotide biosynthesis pathway. The chain is Aspartate carbamoyltransferase catalytic subunit from Desulforamulus reducens (strain ATCC BAA-1160 / DSM 100696 / MI-1) (Desulfotomaculum reducens).